Here is a 342-residue protein sequence, read N- to C-terminus: Probable deoxyhypusine synthase (342 aa).

Lys307 functions as the Nucleophile in the catalytic mechanism.

The protein belongs to the deoxyhypusine synthase family. It depends on NAD(+) as a cofactor.

The enzyme catalyses [eIF5A protein]-L-lysine + spermidine = [eIF5A protein]-deoxyhypusine + propane-1,3-diamine. It functions in the pathway protein modification; eIF5A hypusination. In terms of biological role, catalyzes the NAD-dependent oxidative cleavage of spermidine and the subsequent transfer of the butylamine moiety of spermidine to the epsilon-amino group of a specific lysine residue of the eIF-5A precursor protein to form the intermediate deoxyhypusine residue. This Pyrococcus horikoshii (strain ATCC 700860 / DSM 12428 / JCM 9974 / NBRC 100139 / OT-3) protein is Probable deoxyhypusine synthase (dys).